The following is a 566-amino-acid chain: Urease subunit alpha 2 (566 aa).

Residues 128 to 566 (GGVDTHIHFI…LPMAQRYFLF (439 aa)) form the Urease domain. His133, His135, and Lys216 together coordinate Ni(2+). Lys216 bears the N6-carboxylysine mark. Position 218 (His218) interacts with substrate. Residues His245 and His271 each contribute to the Ni(2+) site. His319 functions as the Proton donor in the catalytic mechanism. Asp359 contributes to the Ni(2+) binding site.

This sequence belongs to the metallo-dependent hydrolases superfamily. Urease alpha subunit family. May form a heterohexamer of 3 UreC (alpha) and 3 UreAB (gamma/beta) subunits. May also form a heterotrimer of UreA (gamma), UreB (beta) and UreC (alpha) subunits. Three heterotrimers associate to form the active enzyme. Ni cation serves as cofactor. In terms of processing, carboxylation allows a single lysine to coordinate two nickel ions.

Its subcellular location is the cytoplasm. It carries out the reaction urea + 2 H2O + H(+) = hydrogencarbonate + 2 NH4(+). The protein operates within nitrogen metabolism; urea degradation; CO(2) and NH(3) from urea (urease route): step 1/1. This is Urease subunit alpha 2 from Pseudomonas syringae pv. syringae (strain B728a).